The chain runs to 213 residues: MEQYKRDFIEFALSRNVLKFGEFTLKSGRKSPYFFNAGLFNTGADLARLGEFYAAAIQASAVDFDVVFGPAYKGIPIGTSVSVALFNRYGIDKPVCFNRKEVKDHGEGGNLIGSPLQGKILLVDDVITAGTAIRESMELISANKAELAAVLIALNRKERGKGELSAIQEVERDYQCQVLSIIDLDDLMQFIEQDPRYSSHLPEMRAYRAEFGV.

Residue K26 participates in 5-phospho-alpha-D-ribose 1-diphosphate binding. 34–35 lines the orotate pocket; sequence FF. 5-phospho-alpha-D-ribose 1-diphosphate-binding positions include 72-73, R99, K100, K103, H105, and 124-132; these read YK and DDVITAGTA. The orotate site is built by T128 and R156.

Belongs to the purine/pyrimidine phosphoribosyltransferase family. PyrE subfamily. As to quaternary structure, homodimer. Mg(2+) is required as a cofactor.

The catalysed reaction is orotidine 5'-phosphate + diphosphate = orotate + 5-phospho-alpha-D-ribose 1-diphosphate. Its pathway is pyrimidine metabolism; UMP biosynthesis via de novo pathway; UMP from orotate: step 1/2. In terms of biological role, catalyzes the transfer of a ribosyl phosphate group from 5-phosphoribose 1-diphosphate to orotate, leading to the formation of orotidine monophosphate (OMP). This Haemophilus influenzae (strain 86-028NP) protein is Orotate phosphoribosyltransferase.